A 918-amino-acid polypeptide reads, in one-letter code: Exostosin-like 3 (918 aa).

Topologically, residues 1–30 (MTGYTMLRNGGVGNGGQTCMLRWSNRIRLT) are cytoplasmic. Positions 1–140 (MTGYTMLRNG…LKNVISQTEH (140 aa)) are required for interaction with REG3A. The helical; Signal-anchor for type II membrane protein transmembrane segment at 31–51 (WLSFTLFIILVFFPLIAHYYL) threads the bilayer. Residues 52-918 (TTLDEADEAG…HDKTKCFKFI (867 aa)) are Lumenal-facing. 2 cysteine pairs are disulfide-bonded: Cys-177/Cys-182 and Cys-188/Cys-236. N-linked (GlcNAc...) asparagine glycosylation occurs at Asn-290. Phosphoserine is present on Ser-361. A disulfide bridge links Cys-399 with Cys-414. Asn-591 is a glycosylation site (N-linked (GlcNAc...) asparagine). Positions 667, 671, 696, 722, 727, 743, 744, and 745 each coordinate UDP-N-acetyl-alpha-D-glucosamine. Mn(2+) is bound at residue Asp-745. Asn-789 carries N-linked (GlcNAc...) asparagine glycosylation. Cys-830 and Cys-878 are disulfide-bonded. UDP-N-acetyl-alpha-D-glucosamine is bound by residues Glu-831, Asp-832, and Arg-875. Residue Asp-832 is part of the active site.

The protein belongs to the glycosyltransferase 47 family. In terms of assembly, homodimer; disulfide-linked. Interacts with REG3A. It depends on Mn(2+) as a cofactor. In terms of tissue distribution, expressed in pancreatic islet beta-cells. Expressed in lung epithelial cells. Expressed in microglia.

It is found in the endoplasmic reticulum membrane. The protein localises to the golgi apparatus. Its subcellular location is the cell membrane. The protein resides in the nucleus. The enzyme catalyses 3-O-(beta-D-GlcA-(1-&gt;3)-beta-D-Gal-(1-&gt;3)-beta-D-Gal-(1-&gt;4)-beta-D-Xyl)-L-seryl-[protein] + UDP-N-acetyl-alpha-D-glucosamine = 3-O-(alpha-D-GlcNAc-(1-&gt;4)-beta-D-GlcA-(1-&gt;3)-beta-D-Gal-(1-&gt;3)-beta-D-Gal-(1-&gt;4)-beta-D-Xyl)-L-seryl-[protein] + UDP + H(+). Its pathway is glycan metabolism; heparan sulfate biosynthesis. In terms of biological role, glycosyltransferase which regulates the biosynthesis of heparan sulfate (HS). Initiates HS synthesis by transferring the first N-acetyl-alpha-D-glucosamine (alpha-GlcNAc) residue (GlcNAcT-I activity) to the tetrasaccharide linker (GlcA-Gal-Gal-Xyl-)Ser core linker. May also transfer alpha-GlcNAc residues during HS elongation (GlcNAcT-II activity). Lacks glucuronyl transferase II (GlcAT-II) activity. Important for both skeletal development and hematopoiesis, through the formation of HS proteoglycans (HSPGs). Through the synthesis of HS, regulates postnatal pancreatic islet maturation and insulin secretion. Receptor for REG3A, REG3B and REG3G, induces the activation of downstream signaling pathways such as PI3K-AKT or RAS-RAF-MEK-ERK signaling pathway. Required for the function of REG3A in regulating keratinocyte proliferation and differentiation. Required for the inhibition of skin inflammation mediated by REG3A through the activation of PI3K-AKT-STAT3 pathway. Required for the function of REG3A and REG3G in glucose tolerance in pancreas. Expressed in microglia, is activated by nociceptor-derived REG3G in response to endotoxins, leading to the inhibition of kynurenine pathway to prevent endotoxic death. This is Exostosin-like 3 from Mus musculus (Mouse).